The chain runs to 564 residues: Malignant brain tumor repeat protein 1 (564 aa).

4 MBT repeats span residues 64-176, 205-327, 331-442, and 450-549; these read FTWS…MKWL, RPTE…TKAT, LEHS…LDRL, and FKWE…LRHP.

In terms of assembly, interacts with histone H3 that is trimethylated at 'Lys-9' (H3K9me3).

The chain is Malignant brain tumor repeat protein 1 (mbtr-1) from Caenorhabditis elegans.